Reading from the N-terminus, the 146-residue chain is MKVVLQRAKQAQVTVEGETVGAIDHGLVLLIGITHGDTEEDARYLAEKIAHLRIFEDEGGKMNQSVKDVGGAILSISQFTLYGDCRKGRRPNFMEAAKPEHAEPLYETLNSHLEQLGLHVETGRFGAMMDVQLINDGPVTLLVESK.

The short motif at 137 to 138 (GP) is the Gly-cisPro motif, important for rejection of L-amino acids element.

It belongs to the DTD family. In terms of assembly, homodimer.

The protein resides in the cytoplasm. It carries out the reaction glycyl-tRNA(Ala) + H2O = tRNA(Ala) + glycine + H(+). The catalysed reaction is a D-aminoacyl-tRNA + H2O = a tRNA + a D-alpha-amino acid + H(+). In terms of biological role, an aminoacyl-tRNA editing enzyme that deacylates mischarged D-aminoacyl-tRNAs. Also deacylates mischarged glycyl-tRNA(Ala), protecting cells against glycine mischarging by AlaRS. Acts via tRNA-based rather than protein-based catalysis; rejects L-amino acids rather than detecting D-amino acids in the active site. By recycling D-aminoacyl-tRNA to D-amino acids and free tRNA molecules, this enzyme counteracts the toxicity associated with the formation of D-aminoacyl-tRNA entities in vivo and helps enforce protein L-homochirality. This is D-aminoacyl-tRNA deacylase from Halalkalibacterium halodurans (strain ATCC BAA-125 / DSM 18197 / FERM 7344 / JCM 9153 / C-125) (Bacillus halodurans).